A 109-amino-acid chain; its full sequence is Mitochondrial pyruvate carrier 1 (109 aa).

Alanine 2 is modified (N-acetylalanine). Topologically, residues 2–20 (AGALVRKAADYVRSKDFRD) are mitochondrial matrix. The chain crosses the membrane as a helical span at residues 21–41 (YLMSTHFWGPVANWGLPIAAI). The Mother cell cytoplasmic segment spans residues 42–52 (NDMKKSPEIIS). Residues 53–71 (GRMTFALCCYSLTFMRFAY) traverse the membrane as a helical segment. Residue lysine 72 is modified to N6-acetyllysine. Over 72 to 109 (KVQPRNWLLFACHATNEVAQLIQGGRLIRHEMSKKASA) the chain is Mitochondrial matrix.

Homodimer. Forms heterodimer with MPC2. The heterodimer is the more stable and dominant form.

It is found in the mitochondrion inner membrane. The catalysed reaction is pyruvate(out) + H(+)(out) = pyruvate(in) + H(+)(in). Mediates the uptake of pyruvate into mitochondria. The chain is Mitochondrial pyruvate carrier 1 (MPC1) from Bos taurus (Bovine).